Consider the following 311-residue polypeptide: Putative UPF0607 protein ENSP00000382826 (311 aa).

The span at alanine 48–valine 61 shows a compositional bias: basic and acidic residues. Disordered regions lie at residues alanine 48–proline 99, glycine 186–leucine 229, and arginine 291–leucine 311. The span at glutamate 78 to tyrosine 97 shows a compositional bias: polar residues. Basic residues-rich tracts occupy residues alanine 213 to leucine 222 and arginine 291 to arginine 305.

This sequence belongs to the UPF0607 family.

In Homo sapiens (Human), this protein is Putative UPF0607 protein ENSP00000382826.